The sequence spans 206 residues: Holliday junction branch migration complex subunit RuvA (206 aa).

Positions 1-63 are domain I; it reads MISSLRGDVI…DDAHTLYAFS (63 aa). Residues 64-142 are domain II; it reads TSEQRETFGI…ALEATSGQAT (79 aa). The segment at 143 to 150 is flexible linker; the sequence is IGDIAATG. Residues 151–206 are domain III; it reads NDTALQSQVVEALVGLGFTEAKAATAVKKILEEQNGTTDPSSVLREALQRLSGQKR.

It belongs to the RuvA family. Homotetramer. Forms an RuvA(8)-RuvB(12)-Holliday junction (HJ) complex. HJ DNA is sandwiched between 2 RuvA tetramers; dsDNA enters through RuvA and exits via RuvB. An RuvB hexamer assembles on each DNA strand where it exits the tetramer. Each RuvB hexamer is contacted by two RuvA subunits (via domain III) on 2 adjacent RuvB subunits; this complex drives branch migration. In the full resolvosome a probable DNA-RuvA(4)-RuvB(12)-RuvC(2) complex forms which resolves the HJ.

The protein localises to the cytoplasm. Functionally, the RuvA-RuvB-RuvC complex processes Holliday junction (HJ) DNA during genetic recombination and DNA repair, while the RuvA-RuvB complex plays an important role in the rescue of blocked DNA replication forks via replication fork reversal (RFR). RuvA specifically binds to HJ cruciform DNA, conferring on it an open structure. The RuvB hexamer acts as an ATP-dependent pump, pulling dsDNA into and through the RuvAB complex. HJ branch migration allows RuvC to scan DNA until it finds its consensus sequence, where it cleaves and resolves the cruciform DNA. The protein is Holliday junction branch migration complex subunit RuvA of Corynebacterium urealyticum (strain ATCC 43042 / DSM 7109).